The primary structure comprises 79 residues: Cyclin-dependent kinases regulatory subunit 2 (79 aa).

Belongs to the CKS family. In terms of assembly, forms a homohexamer that can probably bind six kinase subunits.

Functionally, binds to the catalytic subunit of the cyclin dependent kinases and is essential for their biological function. The protein is Cyclin-dependent kinases regulatory subunit 2 (cks2) of Xenopus laevis (African clawed frog).